The primary structure comprises 93 residues: Putative pterin-4-alpha-carbinolamine dehydratase (93 aa).

The protein belongs to the pterin-4-alpha-carbinolamine dehydratase family.

The catalysed reaction is (4aS,6R)-4a-hydroxy-L-erythro-5,6,7,8-tetrahydrobiopterin = (6R)-L-erythro-6,7-dihydrobiopterin + H2O. The chain is Putative pterin-4-alpha-carbinolamine dehydratase from Trichormus variabilis (strain ATCC 29413 / PCC 7937) (Anabaena variabilis).